Reading from the N-terminus, the 913-residue chain is Chitin synthase 1 (913 aa).

The disordered stretch occupies residues 1–27 (MSGAPPPSSGFAPRSYGQQPLSHAPRS). UDP-N-acetyl-alpha-D-glucosamine is bound by residues threonine 237, glutamate 241, and aspartate 291. N-linked (GlcNAc...) asparagine glycosylation occurs at asparagine 420. Residue aspartate 496 is part of the active site. The N-linked (GlcNAc...) asparagine glycan is linked to asparagine 510. A run of 6 helical transmembrane segments spans residues 539–559 (WLNGAFFATLFSIWNWGRIYS), 581–601 (YTAFGFFLPANLYLALFFIVF), 625–645 (AVYIYNFSYLFGLLMLIIIGL), 658–678 (FVGAVFGLMMMLSSLVGAGIF), 684–704 (TVHSIVVSILTVGVYFIASAL), and 711–731 (IFMTFTHYTALIPSFVNIFTI). The Conserved SWG motif motif lies at 741-743 (SWG). The next 2 membrane-spanning stretches (helical) occupy residues 800 to 820 (VLLTWAFSNLIFALFVVYFAS) and 825 to 845 (MPVLYIFVASLNTCRLLGSIG). 2 N-linked (GlcNAc...) asparagine glycosylation sites follow: asparagine 867 and asparagine 900.

The protein belongs to the chitin synthase family. Class II subfamily. In terms of assembly, homodimer. Mn(2+) serves as cofactor.

It localises to the cell membrane. It catalyses the reaction [(1-&gt;4)-N-acetyl-beta-D-glucosaminyl](n) + UDP-N-acetyl-alpha-D-glucosamine = [(1-&gt;4)-N-acetyl-beta-D-glucosaminyl](n+1) + UDP + H(+). Its activity is regulated as follows. The activity is inhibited by nikkomycin Z (NikZ). Functionally, polymerizes chitin, a structural polymer of the cell wall and septum, by transferring the sugar moiety of UDP-GlcNAc to the non-reducing end of the growing chitin polymer. Involved in mycelial growth, sporangial production, zoospore release and pathogenesis. In Phytophthora sojae (strain P6497) (Soybean stem and root rot agent), this protein is Chitin synthase 1.